The primary structure comprises 488 residues: RNA binding exosome specificity factor Mmi1 (488 aa).

Composition is skewed to polar residues over residues 1 to 14 (MSNT…SSKS), 33 to 47 (LNES…TTHT), and 54 to 66 (SVLS…NFSS). 2 disordered regions span residues 1–20 (MSNT…ELPN) and 25–80 (RSLW…DAPI). Positions 71-80 (PAPESHDAPI) are enriched in basic and acidic residues. The interaction with erh1 stretch occupies residues 95 to 122 (GKYDFSRHCTDYGHSYEWPYFRSLRRES). 2 disordered regions span residues 163 to 185 (SRLH…RRLA) and 225 to 261 (SYPV…TRAS). Thr-176 carries the post-translational modification Phosphothreonine. Phosphoserine occurs at positions 178, 230, 231, 261, 263, and 265. Residues 289-299 (SYLLSNSSNDS) show a composition bias toward low complexity. The interval 289–328 (SYLLSNSSNDSASRKEKPKARASTPPPLNFSRASEHRNEK) is disordered. Ser-311 is subject to Phosphoserine. A Phosphothreonine modification is found at Thr-312. The region spanning 350 to 476 (SRYFIMLCDN…DEGSRLCTLI (127 aa)) is the YTH domain.

As to quaternary structure, component of the erh1-mmi1 complex composed of mmi1 and erh1. Interacts (via N-terminus) with erh1 in a 2:2 stoichiometry. Interacts with rrp6.

The protein resides in the nucleus. In terms of biological role, RNA-binding protein that recognizes and binds N6-methyladenosine (m6A)-containing RNAs, a modification present at internal sites of mRNAs and some non-coding RNAs. Functions alone and as part of the erh1-mmi1 complex, to recruit the CCR4-NOT complex and the NURS complex to target RNAs. Suppresses the meiotic program during vegetative growth and promotes the meiotic program during mating. Binds to DSR (determinant of selective removal) regions in meiotic mRNA, and recruits the NURS complex to targets. Recruitment of NURS complex to target mRNAs promotes mRNA decay by engagement of the nuclear exosome, and formation of heterochromatin islands at meiotic genes silenced by the exosome. Recruitment of the CCR4-NOT complex to target RNAs promotes heterochromatin formation at RNAi-dependent heterochromatin domains (HOODs), including a subset of meiotic genes, lncRNAs and retrotransposons. Recruitment of the CCR4-NOT complex to rDNA promotes rDNA heterochromatin assembly. Promotes non-canonical transcription termination at meiotic genes and prevents lncRNA transcription from invading and repressing adjacent genes. The protein is RNA binding exosome specificity factor Mmi1 (mmi1) of Schizosaccharomyces pombe (strain 972 / ATCC 24843) (Fission yeast).